The primary structure comprises 201 residues: Recombination protein RecR (201 aa).

Residues 60–75 form a C4-type zinc finger; that stretch reads CSCCGNVDTIDPCTVC. One can recognise a Toprim domain in the interval 83–178; that stretch reads SVIIVVEDVS…KITRLAHGVP (96 aa).

It belongs to the RecR family.

In terms of biological role, may play a role in DNA repair. It seems to be involved in an RecBC-independent recombinational process of DNA repair. It may act with RecF and RecO. This is Recombination protein RecR from Agrobacterium fabrum (strain C58 / ATCC 33970) (Agrobacterium tumefaciens (strain C58)).